The sequence spans 106 residues: Iron-sulfur cluster assembly protein CyaY (106 aa).

This sequence belongs to the frataxin family.

In terms of biological role, involved in iron-sulfur (Fe-S) cluster assembly. May act as a regulator of Fe-S biogenesis. The polypeptide is Iron-sulfur cluster assembly protein CyaY (Shigella flexneri).